The primary structure comprises 227 residues: MTMTSTTTKAMAMAAAVLAAAAVAATNAQTCGKQNDGMICPHNLCCSQFGYCGLGRDYCGTGCQSGACCSSQRCGSQGGGATCSNNQCCSQYGYCGFGSEYCGSGCQNGPCRADIKCGSNANGELCPNNMCCSQWGYCGLGSEFCGNGCQSGACCPEKRCGKQAGGDKCPNNFCCSAGGYCGLGGNYCGSGCQSGGCYKGGDGMAAILANNQSVSFEGIIESVAELV.

Residues 1-28 (MTMTSTTTKAMAMAAAVLAAAAVAATNA) form the signal peptide. Position 29 is a pyrrolidone carboxylic acid (Q29). Chitin-binding type-1 domains follow at residues 29–70 (QTCG…ACCS), 71–113 (SQRC…PCRA), 114–156 (DIKC…ACCP), and 157–199 (EKRC…GCYK). Intrachain disulfides connect C31-C46, C40-C52, C45-C59, C63-C68, C74-C89, C83-C95, C88-C102, C106-C111, C117-C132, C126-C138, C131-C145, C149-C154, C160-C175, C169-C181, C174-C188, and C192-C197. 38 to 40 (MIC) is a substrate binding site. Residue 90–101 (SQYGYCGFGSEY) coordinates substrate. Position 142–143 (142–143 (SE)) interacts with substrate. The propeptide occupies 202 to 227 (DGMAAILANNQSVSFEGIIESVAELV). N-linked (GlcNAc...) asparagine glycosylation occurs at N211.

In terms of biological role, N-acetyl-D-glucosamine binding lectin. This is Lectin from Oryza sativa subsp. indica (Rice).